We begin with the raw amino-acid sequence, 286 residues long: Ribonuclease H1 (286 aa).

The segment covering 101–115 (EPLDGDGHESAEPYA) has biased composition (basic and acidic residues). The segment at 101–127 (EPLDGDGHESAEPYAKHMKPSVEPAPP) is disordered. The region spanning 136-282 (MGDFVVVYTD…ADRLAREGAK (147 aa)) is the RNase H type-1 domain. Asp-145, Glu-186, Asp-210, and Asp-274 together coordinate Mg(2+).

It belongs to the RNase H family. Monomer. Requires Mg(2+) as cofactor. As to expression, ubiquitous.

It is found in the cytoplasm. The catalysed reaction is Endonucleolytic cleavage to 5'-phosphomonoester.. In the presence of magnesium, manganese is inhibitory. Endonuclease that specifically degrades the RNA of RNA-DNA hybrids. Plays a role in RNA polymerase II (RNAp II) transcription termination by degrading R-loop RNA-DNA hybrid formation at G-rich pause sites located downstream of the poly(A) site and behind the elongating RNAp II. In Homo sapiens (Human), this protein is Ribonuclease H1 (RNASEH1).